We begin with the raw amino-acid sequence, 548 residues long: Mercuric reductase (548 aa).

Residues 1–65 (MTEITVNGMT…AIAALGYQGS (65 aa)) enclose the HMA domain. Cys-11 and Cys-14 together coordinate a metal cation. Ala-97, Gly-117, and Thr-122 together coordinate FAD. Cys-123 and Cys-128 form a disulfide bridge. 4 residues coordinate FAD: Lys-132, Ala-198, Asp-390, and Val-398. Cys-545 and Cys-546 together coordinate Hg(2+).

It belongs to the class-I pyridine nucleotide-disulfide oxidoreductase family. As to quaternary structure, homodimer. FAD is required as a cofactor.

It carries out the reaction Hg + NADP(+) + H(+) = Hg(2+) + NADPH. Resistance to Hg(2+) in bacteria appears to be governed by a specialized system which includes mercuric reductase. MerA protein is responsible for volatilizing mercury as Hg(0). In Pseudomonas fluorescens, this protein is Mercuric reductase (merA).